The sequence spans 259 residues: DNA adenine methylase (259 aa).

S-adenosyl-L-methionine contacts are provided by Tyr7, Lys11, Asp50, and Asp171.

The protein belongs to the N(4)/N(6)-methyltransferase family. Monomer.

It catalyses the reaction a 2'-deoxyadenosine in DNA + S-adenosyl-L-methionine = an N(6)-methyl-2'-deoxyadenosine in DNA + S-adenosyl-L-homocysteine + H(+). Functionally, an alpha subtpe methyltransferase that recognizes the double-stranded sequence 5'-GATC-3' and methylates A-2 on both strands. May prevent degradation of viral DNA by the host restriction-modification antiviral defense system. This Enterobacteria phage T2 (Bacteriophage T2) protein is DNA adenine methylase.